Reading from the N-terminus, the 409-residue chain is Glutamyl-tRNA reductase (409 aa).

Residues T48–R51, S89, E94–E96, and Q100 each bind substrate. Residue C49 is the Nucleophile of the active site. NADP(+) is bound at residue G165–A170.

Belongs to the glutamyl-tRNA reductase family. As to quaternary structure, homodimer.

It carries out the reaction (S)-4-amino-5-oxopentanoate + tRNA(Glu) + NADP(+) = L-glutamyl-tRNA(Glu) + NADPH + H(+). It functions in the pathway porphyrin-containing compound metabolism; protoporphyrin-IX biosynthesis; 5-aminolevulinate from L-glutamyl-tRNA(Glu): step 1/2. Functionally, catalyzes the NADPH-dependent reduction of glutamyl-tRNA(Glu) to glutamate 1-semialdehyde (GSA). The polypeptide is Glutamyl-tRNA reductase (Thermoplasma volcanium (strain ATCC 51530 / DSM 4299 / JCM 9571 / NBRC 15438 / GSS1)).